Here is a 551-residue protein sequence, read N- to C-terminus: Frizzled-2 (551 aa).

Residues 1–26 (MQGVTRASILLIIYHLFTLSLGQLHG) form the signal peptide. Over 27–231 (EKGISVPEHG…FSQDEIRFAR (205 aa)) the chain is Extracellular. The FZ domain occupies 33–152 (PEHGFCQPIS…HGAEQICVGQ (120 aa)). Cystine bridges form between cysteine 38–cysteine 99, cysteine 46–cysteine 92, cysteine 83–cysteine 120, cysteine 109–cysteine 149, and cysteine 113–cysteine 137. Asparagine 52 carries an N-linked (GlcNAc...) asparagine glycan. An N-linked (GlcNAc...) asparagine glycan is attached at asparagine 153. A helical transmembrane segment spans residues 232 to 252 (IWILIWSVLCCASTFITVTTY). Residues 253–265 (LVDMQRFRYPERP) lie on the Cytoplasmic side of the membrane. The chain crosses the membrane as a helical span at residues 266 to 286 (IIFLSGCYTMVSVAYIAGFVL). Residues 287-313 (GDKVVCNEGFSEDGYKTVVQGTKKEGC) are Extracellular-facing. Residues 314–334 (TILFMMLYFFSMASSIWWVIL) form a helical membrane-spanning segment. Over 335-356 (SLTWFLAAGMKWGHEAIEANSQ) the chain is Cytoplasmic. The helical transmembrane segment at 357–377 (YFHLAAWAVPAVKTITILAMG) threads the bilayer. Topologically, residues 378–400 (QIDGDLLSGVCFVGLNNIDPLRG) are extracellular. The chain crosses the membrane as a helical span at residues 401 to 421 (FVLAPLFVYLFIGTSFLLAGF). At 422 to 447 (VSLFRIRTIMKHDGTKTEKLERLMVR) the chain is on the cytoplasmic side. A helical membrane pass occupies residues 448–468 (IGVFSVLYTVPATIVIACYFY). Residues 469–505 (EQAFREHWERSWVSQNCKSLAIPCPLQYTPRMTPDFT) lie on the Extracellular side of the membrane. Residues 506–526 (VYMIKYLMTLIVGITSGFWIW) form a helical membrane-spanning segment. Over 527-534 (SGKTLHSW) the chain is Cytoplasmic. Residues 529-534 (KTLHSW) carry the Lys-Thr-X-X-X-Trp motif, mediates interaction with the PDZ domain of Dvl family members motif. Residues 549 to 551 (TTV) carry the PDZ-binding motif.

Belongs to the G-protein coupled receptor Fz/Smo family. Widely expressed, especially in the eye anlage, otic vesicle and developing somites.

Its subcellular location is the membrane. It localises to the cell membrane. In terms of biological role, receptor for Wnt proteins. Most of frizzled receptors are coupled to the beta-catenin canonical signaling pathway, which leads to the activation of disheveled proteins, inhibition of GSK-3 kinase, nuclear accumulation of beta-catenin and activation of Wnt target genes. A second signaling pathway involving PKC and calcium fluxes has been seen for some family members, but it is not yet clear if it represents a distinct pathway or if it can be integrated in the canonical pathway, as PKC seems to be required for Wnt-mediated inactivation of GSK-3 kinase. Both pathways seem to involve interactions with G-proteins. May be involved in transduction and intercellular transmission of polarity information during tissue morphogenesis and/or in differentiated tissues. This is Frizzled-2 (fzd2) from Xenopus laevis (African clawed frog).